The chain runs to 151 residues: Ribosome maturation factor RimP (151 aa).

This sequence belongs to the RimP family.

The protein resides in the cytoplasm. In terms of biological role, required for maturation of 30S ribosomal subunits. The protein is Ribosome maturation factor RimP of Vibrio cholerae serotype O1 (strain ATCC 39541 / Classical Ogawa 395 / O395).